A 179-amino-acid polypeptide reads, in one-letter code: Large ribosomal subunit protein uL6 (179 aa).

This sequence belongs to the universal ribosomal protein uL6 family. In terms of assembly, part of the 50S ribosomal subunit.

In terms of biological role, this protein binds to the 23S rRNA, and is important in its secondary structure. It is located near the subunit interface in the base of the L7/L12 stalk, and near the tRNA binding site of the peptidyltransferase center. This Synechococcus sp. (strain RCC307) protein is Large ribosomal subunit protein uL6.